Here is a 195-residue protein sequence, read N- to C-terminus: Protein GrpE (195 aa).

The protein belongs to the GrpE family. As to quaternary structure, homodimer.

The protein resides in the cytoplasm. Its function is as follows. Participates actively in the response to hyperosmotic and heat shock by preventing the aggregation of stress-denatured proteins, in association with DnaK and GrpE. It is the nucleotide exchange factor for DnaK and may function as a thermosensor. Unfolded proteins bind initially to DnaJ; upon interaction with the DnaJ-bound protein, DnaK hydrolyzes its bound ATP, resulting in the formation of a stable complex. GrpE releases ADP from DnaK; ATP binding to DnaK triggers the release of the substrate protein, thus completing the reaction cycle. Several rounds of ATP-dependent interactions between DnaJ, DnaK and GrpE are required for fully efficient folding. The polypeptide is Protein GrpE (Blochmanniella pennsylvanica (strain BPEN)).